Consider the following 369-residue polypeptide: DNA replication and repair protein RecF (369 aa).

30–37 (GDNGSGKT) is a binding site for ATP.

It belongs to the RecF family.

The protein resides in the cytoplasm. Functionally, the RecF protein is involved in DNA metabolism; it is required for DNA replication and normal SOS inducibility. RecF binds preferentially to single-stranded, linear DNA. It also seems to bind ATP. The protein is DNA replication and repair protein RecF of Pseudomonas aeruginosa (strain UCBPP-PA14).